We begin with the raw amino-acid sequence, 483 residues long: Glutamyl-tRNA(Gln) amidotransferase subunit A (483 aa).

Active-site charge relay system residues include Lys-77 and Ser-152. Residue Ser-176 is the Acyl-ester intermediate of the active site.

Belongs to the amidase family. GatA subfamily. As to quaternary structure, heterotrimer of A, B and C subunits.

It catalyses the reaction L-glutamyl-tRNA(Gln) + L-glutamine + ATP + H2O = L-glutaminyl-tRNA(Gln) + L-glutamate + ADP + phosphate + H(+). In terms of biological role, allows the formation of correctly charged Gln-tRNA(Gln) through the transamidation of misacylated Glu-tRNA(Gln) in organisms which lack glutaminyl-tRNA synthetase. The reaction takes place in the presence of glutamine and ATP through an activated gamma-phospho-Glu-tRNA(Gln). The chain is Glutamyl-tRNA(Gln) amidotransferase subunit A from Listeria monocytogenes serotype 4b (strain CLIP80459).